A 208-amino-acid polypeptide reads, in one-letter code: dTTP/UTP pyrophosphatase (208 aa).

The active-site Proton acceptor is Asp78.

This sequence belongs to the Maf family. YhdE subfamily. A divalent metal cation is required as a cofactor.

Its subcellular location is the cytoplasm. The enzyme catalyses dTTP + H2O = dTMP + diphosphate + H(+). It catalyses the reaction UTP + H2O = UMP + diphosphate + H(+). Nucleoside triphosphate pyrophosphatase that hydrolyzes dTTP and UTP. May have a dual role in cell division arrest and in preventing the incorporation of modified nucleotides into cellular nucleic acids. This is dTTP/UTP pyrophosphatase from Maricaulis maris (strain MCS10) (Caulobacter maris).